The sequence spans 92 residues: UPF0223 protein SGO_1052 (92 aa).

This sequence belongs to the UPF0223 family.

This is UPF0223 protein SGO_1052 from Streptococcus gordonii (strain Challis / ATCC 35105 / BCRC 15272 / CH1 / DL1 / V288).